The sequence spans 161 residues: Cyclic pyranopterin monophosphate synthase (161 aa).

Substrate is bound by residues 78 to 80 (LCH) and 116 to 117 (ME). Aspartate 131 is a catalytic residue.

The protein belongs to the MoaC family. Homohexamer; trimer of dimers.

The catalysed reaction is (8S)-3',8-cyclo-7,8-dihydroguanosine 5'-triphosphate = cyclic pyranopterin phosphate + diphosphate. It functions in the pathway cofactor biosynthesis; molybdopterin biosynthesis. In terms of biological role, catalyzes the conversion of (8S)-3',8-cyclo-7,8-dihydroguanosine 5'-triphosphate to cyclic pyranopterin monophosphate (cPMP). This is Cyclic pyranopterin monophosphate synthase from Bordetella pertussis (strain Tohama I / ATCC BAA-589 / NCTC 13251).